Consider the following 427-residue polypeptide: 3-phosphoshikimate 1-carboxyvinyltransferase (427 aa).

The 3-phosphoshikimate site is built by Lys27, Ser28, and Arg32. Lys27 is a phosphoenolpyruvate binding site. Phosphoenolpyruvate contacts are provided by Gly95 and Arg123. 3-phosphoshikimate contacts are provided by Ser166, Ser167, Gln168, Ser192, Asp305, and Lys332. Position 168 (Gln168) interacts with phosphoenolpyruvate. The active-site Proton acceptor is Asp305. Phosphoenolpyruvate is bound by residues Arg336 and Arg377.

It belongs to the EPSP synthase family. In terms of assembly, monomer.

Its subcellular location is the cytoplasm. It catalyses the reaction 3-phosphoshikimate + phosphoenolpyruvate = 5-O-(1-carboxyvinyl)-3-phosphoshikimate + phosphate. It participates in metabolic intermediate biosynthesis; chorismate biosynthesis. Its function is as follows. Catalyzes the transfer of the enolpyruvyl moiety of phosphoenolpyruvate (PEP) to the 5-hydroxyl of shikimate-3-phosphate (S3P) to produce enolpyruvyl shikimate-3-phosphate and inorganic phosphate. The sequence is that of 3-phosphoshikimate 1-carboxyvinyltransferase from Aeropyrum pernix (strain ATCC 700893 / DSM 11879 / JCM 9820 / NBRC 100138 / K1).